Here is a 526-residue protein sequence, read N- to C-terminus: ATP synthase subunit alpha (526 aa).

171 to 178 (GDRQTGKT) contributes to the ATP binding site.

The protein belongs to the ATPase alpha/beta chains family. As to quaternary structure, F-type ATPases have 2 components, CF(1) - the catalytic core - and CF(0) - the membrane proton channel. CF(1) has five subunits: alpha(3), beta(3), gamma(1), delta(1), epsilon(1). CF(0) has three main subunits: a(1), b(2) and c(9-12). The alpha and beta chains form an alternating ring which encloses part of the gamma chain. CF(1) is attached to CF(0) by a central stalk formed by the gamma and epsilon chains, while a peripheral stalk is formed by the delta and b chains.

The protein localises to the cell membrane. It catalyses the reaction ATP + H2O + 4 H(+)(in) = ADP + phosphate + 5 H(+)(out). In terms of biological role, produces ATP from ADP in the presence of a proton gradient across the membrane. The alpha chain is a regulatory subunit. This is ATP synthase subunit alpha from Christiangramia forsetii (strain DSM 17595 / CGMCC 1.15422 / KT0803) (Gramella forsetii).